The following is a 71-amino-acid chain: Small, acid-soluble spore protein I (71 aa).

This sequence belongs to the SspI family.

The protein resides in the spore core. This chain is Small, acid-soluble spore protein I, found in Bacillus velezensis (strain DSM 23117 / BGSC 10A6 / LMG 26770 / FZB42) (Bacillus amyloliquefaciens subsp. plantarum).